We begin with the raw amino-acid sequence, 471 residues long: Variant surface glycoprotein ILTAT 1.1BC (471 aa).

Residues 1–21 (MVKAIASLMLLHIWAIEEIKA) form the signal peptide. The N-linked (GlcNAc...) asparagine glycan is linked to Asn-130. Over residues 158–168 (TVSKTTECNTE) the composition is skewed to polar residues. Disordered regions lie at residues 158–183 (TVSK…TLSK) and 204–232 (GGAC…TTAS). The span at 214–226 (DKIHITNETDSKN) shows a compositional bias: basic and acidic residues. 2 N-linked (GlcNAc...) asparagine glycosylation sites follow: Asn-220 and Asn-260. 2 cysteine pairs are disulfide-bonded: Cys-397–Cys-410 and Cys-406–Cys-421. The segment at 432–454 (AEQAATNQETEGKDGKTTNTTGS) is disordered. N-linked (GlcNAc...) asparagine glycosylation occurs at Asn-450. The GPI-anchor amidated serine moiety is linked to residue Ser-454. A propeptide spans 455–471 (NSFLINKAPVLLAFLLL) (removed in mature form).

The protein localises to the cell membrane. Its function is as follows. VSG forms a coat on the surface of the parasite. The trypanosome evades the immune response of the host by expressing a series of antigenically distinct VSGs from an estimated 1000 VSG genes. In Trypanosoma brucei brucei, this protein is Variant surface glycoprotein ILTAT 1.1BC.